Here is an 863-residue protein sequence, read N- to C-terminus: DNA ligase (863 aa).

NAD(+) is bound by residues 76 to 80 (DAAYD), 125 to 126 (SL), and E159. K161 serves as the catalytic N6-AMP-lysine intermediate. The NAD(+) site is built by R182 and E221. Residues 237 to 256 (EDAGRPPFANPRNAAAGSLR) are disordered. The segment covering 241 to 253 (RPPFANPRNAAAG) has biased composition (low complexity). NAD(+) is bound by residues K346 and K370. Zn(2+)-binding residues include C467, C470, C486, and C492. The BRCT domain occupies 781-863 (GLPQTLEGKS…DTLLATGDVQ (83 aa)).

It belongs to the NAD-dependent DNA ligase family. LigA subfamily. Requires Mg(2+) as cofactor. The cofactor is Mn(2+).

The catalysed reaction is NAD(+) + (deoxyribonucleotide)n-3'-hydroxyl + 5'-phospho-(deoxyribonucleotide)m = (deoxyribonucleotide)n+m + AMP + beta-nicotinamide D-nucleotide.. DNA ligase that catalyzes the formation of phosphodiester linkages between 5'-phosphoryl and 3'-hydroxyl groups in double-stranded DNA using NAD as a coenzyme and as the energy source for the reaction. It is essential for DNA replication and repair of damaged DNA. The sequence is that of DNA ligase from Bifidobacterium animalis subsp. lactis (strain AD011).